Reading from the N-terminus, the 238-residue chain is Transcription termination/antitermination protein NusG (238 aa).

Belongs to the NusG family.

In terms of biological role, participates in transcription elongation, termination and antitermination. The protein is Transcription termination/antitermination protein NusG of Mycobacterium tuberculosis (strain CDC 1551 / Oshkosh).